A 327-amino-acid polypeptide reads, in one-letter code: Annexin A8 (327 aa).

Annexin repeat units lie at residues 21-92 (FNPD…ALMY), 93-164 (PPYR…CLLQ), 177-249 (GLAL…TVVK), and 253-324 (NLHG…NLVG). Positions 266, 268, 270, and 310 each coordinate Ca(2+).

Belongs to the annexin family.

Functionally, this protein is an anticoagulant protein that acts as an indirect inhibitor of the thromboplastin-specific complex, which is involved in the blood coagulation cascade. In Bos taurus (Bovine), this protein is Annexin A8 (ANXA8).